Reading from the N-terminus, the 444-residue chain is MKHFEANFDGLVGPTHNYAGLSFGNVASQSNAAQVSNPKDAAKQGLKKAKALADMGMVQGMLAPQERPDIHTLRRVGFTGSDADVLSQAAKASPVLLQACASASSMWTANAATVSPSADSDDGKLHFTPANLVDKLHRSIEPVTTGNILKAIFTDERYFAHHQHLPEHPHFGDEGAANHTRLCHDYGQAGVEVFVYGRSVADLSRPAPVKYPARQTLEASQAVARLHQLSDDRTVYMQQNPDVIDQGVFHNDVIAVGNQNVLFYHEQAFLETQAKLAEIDKKMHGNMYFIEVPTAKVSVQDAVKSYLFNTQIITLSDGNMAIIAPTDCQENPAVHAYLNELVTLNTPIKAVHYFDVKQSMQNGGGPACLRLRVAMNETELAAVNPQVMMNDALFARLNQWVDKHYRDRLSTQDLADPQLLMESRTALDELTQIMKLGSVYQFQR.

Substrate is bound by residues 19-28 (AGLSFGNVAS), N110, and 137-138 (HR). The active site involves E174. R214 is a binding site for substrate. H250 is an active-site residue. The substrate site is built by D252 and N362. Residue C368 is the Nucleophile of the active site.

Belongs to the succinylarginine dihydrolase family. In terms of assembly, homodimer.

The enzyme catalyses N(2)-succinyl-L-arginine + 2 H2O + 2 H(+) = N(2)-succinyl-L-ornithine + 2 NH4(+) + CO2. It participates in amino-acid degradation; L-arginine degradation via AST pathway; L-glutamate and succinate from L-arginine: step 2/5. Catalyzes the hydrolysis of N(2)-succinylarginine into N(2)-succinylornithine, ammonia and CO(2). The polypeptide is N-succinylarginine dihydrolase (Shewanella amazonensis (strain ATCC BAA-1098 / SB2B)).